The chain runs to 235 residues: Phosphoribosylaminoimidazole-succinocarboxamide synthase (235 aa).

It belongs to the SAICAR synthetase family.

The catalysed reaction is 5-amino-1-(5-phospho-D-ribosyl)imidazole-4-carboxylate + L-aspartate + ATP = (2S)-2-[5-amino-1-(5-phospho-beta-D-ribosyl)imidazole-4-carboxamido]succinate + ADP + phosphate + 2 H(+). It participates in purine metabolism; IMP biosynthesis via de novo pathway; 5-amino-1-(5-phospho-D-ribosyl)imidazole-4-carboxamide from 5-amino-1-(5-phospho-D-ribosyl)imidazole-4-carboxylate: step 1/2. The sequence is that of Phosphoribosylaminoimidazole-succinocarboxamide synthase from Caldanaerobacter subterraneus subsp. tengcongensis (strain DSM 15242 / JCM 11007 / NBRC 100824 / MB4) (Thermoanaerobacter tengcongensis).